A 290-amino-acid chain; its full sequence is Formamidopyrimidine-DNA glycosylase (290 aa).

Catalysis depends on P2, which acts as the Schiff-base intermediate with DNA. E3 acts as the Proton donor in catalysis. K58 (proton donor; for beta-elimination activity) is an active-site residue. 3 residues coordinate DNA: H97, R122, and K165. An FPG-type; atypical zinc finger spans residues 250 to 290; the sequence is KVYGREGEPCPGCDCDPVRTGGIARIVQSGRSTFYCPRHQR. Residue R280 is the Proton donor; for delta-elimination activity of the active site.

Belongs to the FPG family. In terms of assembly, monomer. Requires Zn(2+) as cofactor.

It carries out the reaction Hydrolysis of DNA containing ring-opened 7-methylguanine residues, releasing 2,6-diamino-4-hydroxy-5-(N-methyl)formamidopyrimidine.. The catalysed reaction is 2'-deoxyribonucleotide-(2'-deoxyribose 5'-phosphate)-2'-deoxyribonucleotide-DNA = a 3'-end 2'-deoxyribonucleotide-(2,3-dehydro-2,3-deoxyribose 5'-phosphate)-DNA + a 5'-end 5'-phospho-2'-deoxyribonucleoside-DNA + H(+). Functionally, involved in base excision repair of DNA damaged by oxidation or by mutagenic agents. Acts as a DNA glycosylase that recognizes and removes damaged bases. Has a preference for oxidized purines, such as 7,8-dihydro-8-oxoguanine (8-oxoG). Has AP (apurinic/apyrimidinic) lyase activity and introduces nicks in the DNA strand. Cleaves the DNA backbone by beta-delta elimination to generate a single-strand break at the site of the removed base with both 3'- and 5'-phosphates. The protein is Formamidopyrimidine-DNA glycosylase of Rhodospirillum centenum (strain ATCC 51521 / SW).